The chain runs to 404 residues: MTEVTELSRPEGEALNTREVLLNLGPQHPSTHGVLRLVLELDGEFVERVDPHIGYLHRGTEKLAESFTYTQIFPLTDRLDYLCPPSNNLAFALAVEKLLGIEAPIRAQYIRVMMAELARISGHLLITGALPMDLGAMTALLYVMREREMIMDLLEMITGARMHTSFCRVGGVREDLPDGFFPKIREFCDIFPNRIRDYERLLEDNRVFLNRTKGIGVISAEDAVDLGLSGPNLRASGVDWDIRRDEPYEIYDRLDFNVITRDEGDCYARWRCRVDEMRESMRIIEQCIDQMPEGPFQIDMPTIAFPLDKDRVHCSMEALIQHFDLSAYGFKVPKGEVYSAIEAPKGELGFYIISDGSPKPFRMKVRAPSFVNLQALFGVTNARYLADMIAVLGSLDPVMAEVDK.

It belongs to the complex I 49 kDa subunit family. In terms of assembly, NDH-1 is composed of 14 different subunits. Subunits NuoB, C, D, E, F, and G constitute the peripheral sector of the complex.

The protein localises to the cell inner membrane. The catalysed reaction is a quinone + NADH + 5 H(+)(in) = a quinol + NAD(+) + 4 H(+)(out). NDH-1 shuttles electrons from NADH, via FMN and iron-sulfur (Fe-S) centers, to quinones in the respiratory chain. The immediate electron acceptor for the enzyme in this species is believed to be ubiquinone. Couples the redox reaction to proton translocation (for every two electrons transferred, four hydrogen ions are translocated across the cytoplasmic membrane), and thus conserves the redox energy in a proton gradient. This is NADH-quinone oxidoreductase subunit D 2 from Rhizobium etli (strain ATCC 51251 / DSM 11541 / JCM 21823 / NBRC 15573 / CFN 42).